Here is a 114-residue protein sequence, read N- to C-terminus: Aspartate 1-decarboxylase (114 aa).

The Schiff-base intermediate with substrate; via pyruvic acid role is filled by serine 25. Serine 25 bears the Pyruvic acid (Ser) mark. Residue threonine 57 coordinates substrate. The active-site Proton donor is the tyrosine 58. 71–73 (GAA) is a binding site for substrate.

It belongs to the PanD family. Heterooctamer of four alpha and four beta subunits. The cofactor is pyruvate. Is synthesized initially as an inactive proenzyme, which is activated by self-cleavage at a specific serine bond to produce a beta-subunit with a hydroxyl group at its C-terminus and an alpha-subunit with a pyruvoyl group at its N-terminus.

It is found in the cytoplasm. It carries out the reaction L-aspartate + H(+) = beta-alanine + CO2. The protein operates within cofactor biosynthesis; (R)-pantothenate biosynthesis; beta-alanine from L-aspartate: step 1/1. Its function is as follows. Catalyzes the pyruvoyl-dependent decarboxylation of aspartate to produce beta-alanine. In Campylobacter hominis (strain ATCC BAA-381 / DSM 21671 / CCUG 45161 / LMG 19568 / NCTC 13146 / CH001A), this protein is Aspartate 1-decarboxylase.